We begin with the raw amino-acid sequence, 413 residues long: Replication factor C large subunit (413 aa).

Residue 54–61 participates in ATP binding; the sequence is GPPGSGKT.

The protein belongs to the activator 1 small subunits family. RfcL subfamily. As to quaternary structure, heteromultimer composed of small subunits (RfcS) and large subunits (RfcL).

In terms of biological role, part of the RFC clamp loader complex which loads the PCNA sliding clamp onto DNA. This is Replication factor C large subunit from Thermofilum pendens (strain DSM 2475 / Hrk 5).